The following is a 169-amino-acid chain: Peptidyl-prolyl cis-trans isomerase (169 aa).

Residues 5–168 (FFDMTIGGQP…SEVKIAKCGQ (164 aa)) enclose the PPIase cyclophilin-type domain.

The protein belongs to the cyclophilin-type PPIase family.

The protein resides in the cytoplasm. It catalyses the reaction [protein]-peptidylproline (omega=180) = [protein]-peptidylproline (omega=0). With respect to regulation, binds cyclosporin A (CsA). CsA mediates some of its effects via an inhibitory action on PPIase. PPIases accelerate the folding of proteins. It catalyzes the cis-trans isomerization of proline imidic peptide bonds in oligopeptides. This Unspecified eudicot DB-1992 protein is Peptidyl-prolyl cis-trans isomerase.